The primary structure comprises 379 residues: MKSVGLITEYNPFHNGHQYHINQSKKLTNADVTIAIMSGNFVMRGEPAIYNKFTRAKMALSTADLVIELPATASLSSGDHFAELAVKVADYMSVDTIAFGSENNDIKTLKQLAHSINEIEQSESFSQKVKEGKSYPRIISELLEHHEALASPNNILGISYLKAIAKNAKNINAISIKRENAQHHDSLIQHHQFASGTSIRTSIISQDDHWHHVVPKDIQHLYVTPHITLNQIFPYLKYQIIAMTTDSLKNIYTVTEGFENRLKSNIYEATDFHHFVKLLKTKRYTYTHIQRLLMNVLLNIKPTDVTSNIHAVKVLAMNDRGRQYLKHLKTAFPERQYITNINKSNAHYFTNEIKATHIYNAISGQQQTDFNTPVIQQYR.

ATP-binding positions include 7–20 (ITEYNPFHNGHQYH), glycine 100, asparagine 153, and arginine 178.

Belongs to the TmcAL family.

It is found in the cytoplasm. The enzyme catalyses cytidine(34) in elongator tRNA(Met) + acetate + ATP = N(4)-acetylcytidine(34) in elongator tRNA(Met) + AMP + diphosphate. Functionally, catalyzes the formation of N(4)-acetylcytidine (ac(4)C) at the wobble position of elongator tRNA(Met), using acetate and ATP as substrates. First activates an acetate ion to form acetyladenylate (Ac-AMP) and then transfers the acetyl group to tRNA to form ac(4)C34. The polypeptide is tRNA(Met) cytidine acetate ligase (Staphylococcus aureus (strain Mu3 / ATCC 700698)).